The chain runs to 276 residues: Putative oxidoreductase SadH (276 aa).

A substrate-binding site is contributed by Ser142. Residue Tyr155 is the Proton acceptor of the active site.

Belongs to the short-chain dehydrogenases/reductases (SDR) family.

In terms of biological role, required for maintaining the appropriate mycolic acid composition and permeability of the envelope on its exposure to acidic pH. The sequence is that of Putative oxidoreductase SadH (sadH) from Mycobacterium tuberculosis (strain CDC 1551 / Oshkosh).